Consider the following 189-residue polypeptide: Molybdenum cofactor guanylyltransferase (189 aa).

GTP-binding positions include 12 to 14 (LAG), Lys-24, Asp-68, and Asp-94. Residue Asp-94 coordinates Mg(2+).

It belongs to the MobA family. In terms of assembly, monomer. The cofactor is Mg(2+).

Its subcellular location is the cytoplasm. The enzyme catalyses Mo-molybdopterin + GTP + H(+) = Mo-molybdopterin guanine dinucleotide + diphosphate. Its function is as follows. Transfers a GMP moiety from GTP to Mo-molybdopterin (Mo-MPT) cofactor (Moco or molybdenum cofactor) to form Mo-molybdopterin guanine dinucleotide (Mo-MGD) cofactor. The chain is Molybdenum cofactor guanylyltransferase from Xanthomonas euvesicatoria pv. vesicatoria (strain 85-10) (Xanthomonas campestris pv. vesicatoria).